We begin with the raw amino-acid sequence, 657 residues long: Threonine--tRNA ligase (657 aa).

A TGS domain is found at 1–70 (MSDHKESTGA…NSDAAIEIIT (70 aa)). The tract at residues 253 to 555 (DHRKLGAELE…LIEHTAGNFP (303 aa)) is catalytic. Zn(2+) contacts are provided by Cys-351, His-402, and His-532.

This sequence belongs to the class-II aminoacyl-tRNA synthetase family. In terms of assembly, homodimer. It depends on Zn(2+) as a cofactor.

It localises to the cytoplasm. It carries out the reaction tRNA(Thr) + L-threonine + ATP = L-threonyl-tRNA(Thr) + AMP + diphosphate + H(+). Its function is as follows. Catalyzes the attachment of threonine to tRNA(Thr) in a two-step reaction: L-threonine is first activated by ATP to form Thr-AMP and then transferred to the acceptor end of tRNA(Thr). Also edits incorrectly charged L-seryl-tRNA(Thr). The protein is Threonine--tRNA ligase of Chlorobium chlorochromatii (strain CaD3).